Reading from the N-terminus, the 657-residue chain is Folic acid synthesis protein FOL1 (657 aa).

The segment at 1-116 (MDKIIIKDLL…WPGVQIERTL (116 aa)) is DHNA. The interval 149–274 (YLAFGSNLGD…FVLLPLSDIA (126 aa)) is HPPK. In terms of domain architecture, Pterin-binding spans 333–641 (TFIMGILNVT…DIPEIRDAML (309 aa)). Positions 335–657 (IMGILNVTPD…KPQRRYQIQK (323 aa)) are DHPS. Asparagine 340 serves as a coordination point for Mg(2+). (7,8-dihydropterin-6-yl)methyl diphosphate is bound by residues threonine 380, aspartate 416, and asparagine 435. The segment at 466–524 (LNNSNDSNSNSSINTNGEDNNNNNNNNNNNNNNNNNNNNNNNNNDDNDNDNRSKIKQKI) is disordered. Residues 467-509 (NNSNDSNSNSSINTNGEDNNNNNNNNNNNNNNNNNNNNNNNNN) show a composition bias toward low complexity. Over residues 514-524 (NDNRSKIKQKI) the composition is skewed to basic and acidic residues. (7,8-dihydropterin-6-yl)methyl diphosphate is bound by residues aspartate 547, lysine 583, and 629–631 (RIH).

It in the N-terminal section; belongs to the DHNA family. The protein in the central section; belongs to the HPPK family. In the C-terminal section; belongs to the DHPS family. Requires Mg(2+) as cofactor.

The catalysed reaction is 7,8-dihydroneopterin = 6-hydroxymethyl-7,8-dihydropterin + glycolaldehyde. It carries out the reaction 6-hydroxymethyl-7,8-dihydropterin + ATP = (7,8-dihydropterin-6-yl)methyl diphosphate + AMP + H(+). The enzyme catalyses (7,8-dihydropterin-6-yl)methyl diphosphate + 4-aminobenzoate = 7,8-dihydropteroate + diphosphate. It functions in the pathway cofactor biosynthesis; tetrahydrofolate biosynthesis; 2-amino-4-hydroxy-6-hydroxymethyl-7,8-dihydropteridine diphosphate from 7,8-dihydroneopterin triphosphate: step 3/4. Its pathway is cofactor biosynthesis; tetrahydrofolate biosynthesis; 2-amino-4-hydroxy-6-hydroxymethyl-7,8-dihydropteridine diphosphate from 7,8-dihydroneopterin triphosphate: step 4/4. The protein operates within cofactor biosynthesis; tetrahydrofolate biosynthesis; 7,8-dihydrofolate from 2-amino-4-hydroxy-6-hydroxymethyl-7,8-dihydropteridine diphosphate and 4-aminobenzoate: step 1/2. Functionally, catalyzes three sequential steps of tetrahydrofolate biosynthesis. The protein is Folic acid synthesis protein FOL1 (fol1) of Dictyostelium discoideum (Social amoeba).